A 358-amino-acid chain; its full sequence is METVESSSSAELLRAQMHFSTQLFGFHYTAALKCAVKLGIPDAIKQHGKPMNLSELNSALSINPSKAPCIHRLMRILVTAGYFAQENECFSLTSAGRHFLKDDPLNIRALVLLELHPALVKPWIALGEWFQNDDVSPFATAHGKSFWDYVTSDPELRKLFDESMADDSQLIAKALVTEFRYVFEGLKSLVDVGGGSGTLARAIAKAFPNLKCTVCDLPDAVANEHGDGNLDFVAGDMFERVPSADSILLKHILHDWSDEKCVEILKKCREAIPKNGGKVIIVDKLLKNRGHGHAENEHDEATESPLSCDMEMLVLVNGKERDEKEWAKLFSGAGFNDYKYNITPVLGSTSLIEVNFYN.

S-adenosyl-L-methionine is bound by residues Gly193, Asp216, Asp236, Met237, and Lys250. The active-site Proton acceptor is His254.

It belongs to the class I-like SAM-binding methyltransferase superfamily. Cation-independent O-methyltransferase family. Expressed in roots.

Its subcellular location is the cytoplasm. The protein resides in the cytosol. The catalysed reaction is (S)-reticuline + S-adenosyl-L-methionine = (S)-laudanine + S-adenosyl-L-homocysteine + H(+). The protein operates within alkaloid biosynthesis. In terms of biological role, O-methyltransferase involved in the biosynthesis of ipecac and benzylisoquinoline monoterpenoid-isoquinoline alkaloids natural products, starting by the condensation of dopamine and secologanin, and including emetine and cephaeline, drugs used both as anti-protozoal (e.g. treatment of ameobiasis) and as emetic agents. Catalyzes 2-O-methylation of 3-O-methylredipecamine and, with less efficiency, the 7-O-methylation of (S)-coclaurine, (R,S)-N-methylcoclaurine, (R,S)-4'-O-methylcoclaurine, (R,S)-6-O-methyllaudanosoline, nororientaline, (S)-norreticuline and (S)-reticuline. This is 3-O-methylredipecamine 2-O-methyltransferase IpeOMT3 from Carapichea ipecacuanha (Ipecac).